Consider the following 185-residue polypeptide: Transcription factor bHLH109 (185 aa).

Positions 67–117 constitute a bHLH domain; sequence RSMEYRMMMEKKRRKEIKDKVDILQGLMPNHCTKPDLASKLENIIEYIKSL.

This sequence belongs to the bHLH protein family. In terms of assembly, homodimer.

It is found in the nucleus. Its function is as follows. Transcription factor involved in somatic embryogenesis. Acts as a positive regulator of somatic embryo formation. Acts as a positive regulator of ECP63 by targeting its promoter and inducing its expression. This is Transcription factor bHLH109 (BHLH109) from Arabidopsis thaliana (Mouse-ear cress).